A 441-amino-acid chain; its full sequence is Hydroxycinnamoyl-CoA:5-hydroxyanthranilate N-hydroxycinnamoyltransferase HHT1 (441 aa).

Active-site proton acceptor residues include His-158 and Asp-388.

Belongs to the plant acyltransferase family.

It carries out the reaction 5-hydroxyanthranilate + (E)-4-coumaroyl-CoA = avenanthramide A + CoA. The catalysed reaction is 5-hydroxyanthranilate + (E)-caffeoyl-CoA = avenanthramide C + CoA. Its function is as follows. Involved in the biosynthesis of avenanthramide phytoalexins, which are phenolic alkaloids found mainly in oats. Catalyzes the N-acylation of 5-hydroxyanthranilate with 4-coumaroyl-CoA or caffeoyl-CoA as acyl donors, forming avenanthramide A and avenanthramide C, respectively. Does not accept feruloyl-CoA as a substrate. The sequence is that of Hydroxycinnamoyl-CoA:5-hydroxyanthranilate N-hydroxycinnamoyltransferase HHT1 from Avena sativa (Oat).